A 541-amino-acid chain; its full sequence is Carboxypeptidase Y homolog A (541 aa).

A signal peptide spans 1 to 17; it reads MKTFTAALLVGTALAAV. The propeptide occupies 18–122; that stretch reads PQQQPLQTQV…KLENYDLRVK (105 aa). Intrachain disulfides connect cysteine 177–cysteine 416, cysteine 311–cysteine 325, cysteine 335–cysteine 358, cysteine 342–cysteine 351, and cysteine 380–cysteine 386. Asparagine 208 carries N-linked (GlcNAc...) asparagine glycosylation. Serine 264 is an active-site residue. Aspartate 455 is an active-site residue. Residues asparagine 485, asparagine 491, and asparagine 506 are each glycosylated (N-linked (GlcNAc...) asparagine). The active site involves histidine 517.

Belongs to the peptidase S10 family.

It is found in the vacuole. The enzyme catalyses Release of a C-terminal amino acid with broad specificity.. Vacuolar carboxypeptidase involved in degradation of small peptides. Digests preferentially peptides containing an aliphatic or hydrophobic residue in P1' position, as well as methionine, leucine or phenylalanine in P1 position of ester substrate. The sequence is that of Carboxypeptidase Y homolog A (cpyA) from Uncinocarpus reesii (strain UAMH 1704).